Here is a 70-residue protein sequence, read N- to C-terminus: Small ribosomal subunit protein bS21 (70 aa).

It belongs to the bacterial ribosomal protein bS21 family.

This is Small ribosomal subunit protein bS21 from Campylobacter jejuni subsp. jejuni serotype O:23/36 (strain 81-176).